Consider the following 739-residue polypeptide: Mitochondrial proton/calcium exchanger protein (739 aa).

The transit peptide at 1 to 115 (MASILLRSCR…RGWHSSRPVR (115 aa)) directs the protein to the mitochondrion. A coiled-coil region spans residues 115–136 (RDDSVVEKSLKSLKDKNKKLEE). Residues 116–208 (DDSVVEKSLK…FLRICADLFR (93 aa)) lie on the Mitochondrial intermembrane side of the membrane. Residue Thr-192 is modified to Phosphothreonine; by PINK1. The chain crosses the membrane as a helical span at residues 209–229 (LVPFLVFVVVPFMEFLLPVAV). At 230–739 (KLFPNMLPST…AEKEVAEVKS (510 aa)) the chain is on the mitochondrial matrix side. A Letm1 RBD domain is found at 252-537 (KELRVKLELA…TAPVLEGLKE (286 aa)). Coiled-coil stretches lie at residues 462–490 (NKAK…KRSE) and 537–627 (EEEI…SQLE). Lys-597 bears the N6-acetyllysine mark. Residues 663-698 (IPESKLTSLAAALDENKDGKVNIDDLVKVIELVDKE) form the EF-hand domain. The Ca(2+) site is built by Asp-676, Asn-678, Asp-680, Lys-682, and Asp-687. Residues 708 to 739 (AEIVATLEKEEKVEEKEKAKEKAEKEVAEVKS) are a coiled coil. Residues 718 to 739 (EKVEEKEKAKEKAEKEVAEVKS) are disordered.

The protein belongs to the LETM1 family. As to quaternary structure, homohexamer. Can form 2 complexes: a major (300 kDa) and a minor complex (500-600 kDa). Interacts with BCS1L. Interacts with GHITM. Post-translationally, PINK1-mediated phosphorylation at Thr-192, positively regulates its mitochondrial calcium transport activity.

Its subcellular location is the mitochondrion inner membrane. It carries out the reaction Ca(2+)(in) + 2 H(+)(out) = Ca(2+)(out) + 2 H(+)(in). It catalyses the reaction K(+)(in) + H(+)(out) = K(+)(out) + H(+)(in). With respect to regulation, inhibited by ruthenium red or its derivative Ru360. In terms of biological role, plays an important role in maintenance of mitochondrial morphology and in mediating either calcium or potassium/proton antiport. Mediates proton-dependent calcium efflux from mitochondrion. Also functions as an electroneutral mitochondrial proton/potassium exchanger. Crucial for the maintenance of mitochondrial tubular networks and for the assembly of the supercomplexes of the respiratory chain. Required for the maintenance of the tubular shape and cristae organization. The chain is Mitochondrial proton/calcium exchanger protein from Homo sapiens (Human).